The chain runs to 326 residues: Probable cell division protein WhiA (326 aa).

The segment at residues 275 to 308 (SLEELGQLAEPPMTKDAVAGRIRRLLAMADKRAR) is a DNA-binding region (H-T-H motif).

Belongs to the WhiA family.

Involved in cell division and chromosome segregation. The polypeptide is Probable cell division protein WhiA (Saccharopolyspora erythraea (strain ATCC 11635 / DSM 40517 / JCM 4748 / NBRC 13426 / NCIMB 8594 / NRRL 2338)).